Reading from the N-terminus, the 499-residue chain is Serine/threonine-protein phosphatase 5 (499 aa).

A disordered region spans residues 1–23; the sequence is MAMAEGERTECAEPPRDEPPADG. Alanine 2 is subject to N-acetylalanine. TPR repeat units follow at residues 28 to 61, 62 to 95, and 96 to 129; these read AEELKTQANDYFKAKDYENAIKFYSQAIELNPSN, AIYYGNRSLAYLRTECYGYALGDATRAIELDKKY, and IKGYYRRAASNMALGKFRAALRDYETVVKVKPHD. The segment at 184-499 is catalytic; it reads GKVTISFMKE…ANTLLQLGMM (316 aa). Aspartate 242, histidine 244, and aspartate 271 together coordinate Mn(2+). Histidine 244 is a binding site for substrate. Residues arginine 275 and 303 to 304 each bind substrate; that span reads NH. Asparagine 303 provides a ligand contact to Mn(2+). Histidine 304 functions as the Proton donor/acceptor in the catalytic mechanism. Histidine 352 contributes to the Mn(2+) binding site. Positions 400 and 427 each coordinate substrate. Histidine 427 contacts Mn(2+). The required for autoinhibition stretch occupies residues 495–499; the sequence is QLGMM.

It belongs to the PPP phosphatase family. PP-5 (PP-T) subfamily. In terms of assembly, probably forms a complex composed of chaperones HSP90 and HSP70, co-chaperones STIP1/HOP, CDC37, PPP5C, PTGES3/p23, TSC1 and client protein TSC2. Probably forms a complex composed of chaperones HSP90 and HSP70, co-chaperones CDC37, PPP5C, TSC1 and client protein TSC2, CDK4, AKT, RAF1 and NR3C1; this complex does not contain co-chaperones STIP1/HOP and PTGES3/p23. Part of a complex with HSP90/HSP90AA1 and steroid receptors. Interacts (via TPR repeats) with HSP90AA1 (via TPR repeat-binding motif) or HSPA1A/HSPA1B; the interaction is direct and activates the phosphatase activity. Dissociates from HSPA1A/HSPA1B and HSP90AA1 in response to arachidonic acid. Interacts with CPNE1 (via VWFA domain). Interacts with CDC16, CDC27. Interacts with KLHDC10 (via the 6 Kelch repeats); inhibits the phosphatase activity on MAP3K5. Interacts with ATM and ATR; both interactions are induced by DNA damage and enhance ATM and ATR kinase activity. Interacts with RAD17; reduced by DNA damage. Interacts with nuclear receptors such as NR3C1/GCR and PPARG (activated by agonist); regulates their transactivation activities. Interacts (via TPR repeats) with S100 proteins S100A1, S100A2, S100A6, S100B and S100P; the interactions are calcium-dependent, strongly activate PPP5C phosphatase activity and compete with HSP90AA1 and MAP3K5 interactions. Interacts with SMAD2 and SMAD3 but not with SMAD1; decreases SMAD3 phosphorylation and protein levels. Interacts (via TPR repeats) with CRY1 and CRY2; the interaction with CRY2 down-regulates the phosphatase activity on CSNK1E. Interacts (via TPR repeats) with the active form of RAC1, GNA12 or GNA13; these interactions activate the phosphatase activity and translocate PPP5C to the cell membrane. Interacts with FLCN. The cofactor is Mg(2+). It depends on Mn(2+) as a cofactor. Activated by at least two different proteolytic cleavages producing a 56 kDa and a 50 kDa form. Ubiquitous.

The protein localises to the nucleus. It is found in the cytoplasm. Its subcellular location is the cell membrane. The catalysed reaction is O-phospho-L-seryl-[protein] + H2O = L-seryl-[protein] + phosphate. It carries out the reaction O-phospho-L-threonyl-[protein] + H2O = L-threonyl-[protein] + phosphate. Its activity is regulated as follows. Autoinhibited. In the autoinhibited state, the TPR domain interacts with the catalytic region and prevents substrate access to the catalytic pocket. Allosterically activated by various polyunsaturated fatty acids, free long-chain fatty-acids and long-chain fatty acyl-CoA esters, arachidonic acid being the most effective activator. HSP90A and probably RAC1, GNA12 and GNA13 can also release the autoinhibition by the TPR repeat. Activation by RAC1, GNA12 and GNA13 is synergistic with the one produced by fatty acids binding. Inhibited by okadaic acid. Serine/threonine-protein phosphatase that dephosphorylates a myriad of proteins involved in different signaling pathways including the kinases CSNK1E, ASK1/MAP3K5, PRKDC and RAF1, the nuclear receptors NR3C1, PPARG, ESR1 and ESR2, SMAD proteins and TAU/MAPT. Implicated in wide ranging cellular processes, including apoptosis, differentiation, DNA damage response, cell survival, regulation of ion channels or circadian rhythms, in response to steroid and thyroid hormones, calcium, fatty acids, TGF-beta as well as oxidative and genotoxic stresses. Participates in the control of DNA damage response mechanisms such as checkpoint activation and DNA damage repair through, for instance, the regulation ATM/ATR-signaling and dephosphorylation of PRKDC and TP53BP1. Inhibits ASK1/MAP3K5-mediated apoptosis induced by oxidative stress. Plays a positive role in adipogenesis, mainly through the dephosphorylation and activation of PPARG transactivation function. Also dephosphorylates and inhibits the anti-adipogenic effect of NR3C1. Regulates the circadian rhythms, through the dephosphorylation and activation of CSNK1E. May modulate TGF-beta signaling pathway by the regulation of SMAD3 phosphorylation and protein expression levels. Dephosphorylates and may play a role in the regulation of TAU/MAPT. Through their dephosphorylation, may play a role in the regulation of ions channels such as KCNH2. Dephosphorylate FNIP1, disrupting interaction with HSP90AA1/Hsp90. The chain is Serine/threonine-protein phosphatase 5 (PPP5C) from Homo sapiens (Human).